The primary structure comprises 225 residues: MNLTYKVHPIKTRYQGWTNYCYIIEDIVSRSAIVVDPSWELSKITTTLSELEAELKAVALTHSHYDHVNLVDPLTKMFNAQVYMSKKEIDYYQFRCRNLISLDDHQTISIGNTRAQCLLTPGHTAGGMCYLFSESIFTGDTVFTEGCGICEDDGSSAEEMFDSIQRIKSEVSPHVRVYPGHSFGKSPGHSIKDLYQHNIYFQIDKKEYFVKFRTRKNQKGIFDFK.

7 residues coordinate Zn(2+): His62, His64, Asp66, His67, His123, Asp140, and His181.

The protein belongs to the metallo-beta-lactamase superfamily. It depends on Zn(2+) as a cofactor.

It localises to the cytoplasm. It functions in the pathway antibiotic biosynthesis; bacillaene biosynthesis. In terms of biological role, probably involved in some intermediate steps for the synthesis of the antibiotic polyketide bacillaene which is involved in secondary metabolism. This is Probable polyketide biosynthesis zinc-dependent hydrolase PksB (pksB) from Bacillus subtilis (strain 168).